The chain runs to 483 residues: Cobyric acid synthase (483 aa).

The GATase cobBQ-type domain occupies 251–438 (ALIVAVPMLP…LHGVFSADRF (188 aa)). Residue C333 is the Nucleophile of the active site. H430 is a catalytic residue.

It belongs to the CobB/CobQ family. CobQ subfamily.

The protein operates within cofactor biosynthesis; adenosylcobalamin biosynthesis. Its function is as follows. Catalyzes amidations at positions B, D, E, and G on adenosylcobyrinic A,C-diamide. NH(2) groups are provided by glutamine, and one molecule of ATP is hydrogenolyzed for each amidation. This chain is Cobyric acid synthase, found in Brucella canis (strain ATCC 23365 / NCTC 10854 / RM-666).